The sequence spans 163 residues: Nucleotide-binding protein ROP_16630 (163 aa).

The protein belongs to the YajQ family.

Its function is as follows. Nucleotide-binding protein. The sequence is that of Nucleotide-binding protein ROP_16630 from Rhodococcus opacus (strain B4).